The primary structure comprises 430 residues: Enolase (430 aa).

Q166 lines the (2R)-2-phosphoglycerate pocket. E208 functions as the Proton donor in the catalytic mechanism. Mg(2+)-binding residues include D245, E288, and D315. K340, R369, S370, and K391 together coordinate (2R)-2-phosphoglycerate. K340 acts as the Proton acceptor in catalysis.

This sequence belongs to the enolase family. Mg(2+) is required as a cofactor.

The protein resides in the cytoplasm. It is found in the secreted. The protein localises to the cell surface. It catalyses the reaction (2R)-2-phosphoglycerate = phosphoenolpyruvate + H2O. It participates in carbohydrate degradation; glycolysis; pyruvate from D-glyceraldehyde 3-phosphate: step 4/5. Functionally, catalyzes the reversible conversion of 2-phosphoglycerate (2-PG) into phosphoenolpyruvate (PEP). It is essential for the degradation of carbohydrates via glycolysis. The protein is Enolase of Clostridium kluyveri (strain NBRC 12016).